The chain runs to 307 residues: D-alanine--D-alanine ligase (307 aa).

Residues 108-301 form the ATP-grasp domain; it reads KEVFAAAGLP…FPEFCAWMVE (194 aa). Position 135 to 185 (135 to 185) interacts with ATP; sequence LPPPYVVKPNCEGSSVGVYIVQADANGPPRLAPDMPRDLMVETYIPGRELT. Mg(2+)-binding residues include aspartate 252, glutamate 268, and asparagine 270.

It belongs to the D-alanine--D-alanine ligase family. It depends on Mg(2+) as a cofactor. The cofactor is Mn(2+).

The protein resides in the cytoplasm. The catalysed reaction is 2 D-alanine + ATP = D-alanyl-D-alanine + ADP + phosphate + H(+). It participates in cell wall biogenesis; peptidoglycan biosynthesis. Functionally, cell wall formation. The polypeptide is D-alanine--D-alanine ligase (Cereibacter sphaeroides (strain ATCC 17025 / ATH 2.4.3) (Rhodobacter sphaeroides)).